The following is a 159-amino-acid chain: SsrA-binding protein (159 aa).

The protein belongs to the SmpB family.

The protein localises to the cytoplasm. In terms of biological role, required for rescue of stalled ribosomes mediated by trans-translation. Binds to transfer-messenger RNA (tmRNA), required for stable association of tmRNA with ribosomes. tmRNA and SmpB together mimic tRNA shape, replacing the anticodon stem-loop with SmpB. tmRNA is encoded by the ssrA gene; the 2 termini fold to resemble tRNA(Ala) and it encodes a 'tag peptide', a short internal open reading frame. During trans-translation Ala-aminoacylated tmRNA acts like a tRNA, entering the A-site of stalled ribosomes, displacing the stalled mRNA. The ribosome then switches to translate the ORF on the tmRNA; the nascent peptide is terminated with the 'tag peptide' encoded by the tmRNA and targeted for degradation. The ribosome is freed to recommence translation, which seems to be the essential function of trans-translation. This is SsrA-binding protein from Saccharophagus degradans (strain 2-40 / ATCC 43961 / DSM 17024).